Consider the following 652-residue polypeptide: Zinc finger protein 432 (652 aa).

Residues 8 to 79 (LTLEDVTVEF…EDERHSRICP (72 aa)) enclose the KRAB domain. At Y41 the chain carries 3'-nitrotyrosine. ADP-ribosylserine occurs at positions 139 and 164. C2H2-type zinc fingers lie at residues 205-227 (HVCSECGKAFVKKSQLTDHERVH), 233-255 (YGCTLCAKVFSRKSRLNEHQRIH), 261-283 (FICSECGKVFTMKSRLIEHQRTH), 289-311 (YICNECGKGFPGKRNLIVHQRNH), 317-339 (YICSECGKGFTGKSMLIIHQRTH), 345-367 (YICSECGKGFTTKHYVIIHQRNH), 373-395 (YICNECGKGFTMKSRMIEHQRTH), 401-423 (YICSECGKGFPRKSNLIVHQRNH), 429-451 (YLCSECGKGFTVKSMLIIHQRTH), 457-479 (YTCSECGKGFPLKSRLIVHQRTH), 485-507 (YRCSECGKGFIVNSGLMLHQRTH), 513-535 (YICNECGKGFAFKSNLVVHQRTH), 541-563 (FMCSECGKGFTMKRYLIVHQQIH), 567-591 (KSCICSECGRGFAKETELALHKQVH), 597-619 (YGCNECGKGFTMKSRLIVHQRTH), and 625-647 (FVCSECRKAFSSKRNLIVHQRTH). At S246 the chain carries ADP-ribosylserine. S330 is modified (ADP-ribosylserine). S414 carries the post-translational modification ADP-ribosylserine.

Belongs to the krueppel C2H2-type zinc-finger protein family. Interacts with PARP1 and several chromatin remodeling proteins; the interaction with PARP1 reshapes ZNF432 interacting proteins. Interacts with TRIM28; the interaction is independent of PARP1.

Its subcellular location is the nucleus. In terms of biological role, homologous recombination repressor that functions as a poly(ADP-ribose) (PAR) reader regulating DNA damage response and PARP inhibition. Once recruited to DNA lesions via DNA-, in a PAR-dependent mechanism, stimulates PARP1 activity. Binds preferentially ssDNA and inhibits EXO1-mediated resection, probably through a PAR-independent DNA-binding mechanism. The polypeptide is Zinc finger protein 432 (Homo sapiens (Human)).